A 141-amino-acid polypeptide reads, in one-letter code: Transcription antitermination protein NusB (141 aa).

It belongs to the NusB family.

Involved in transcription antitermination. Required for transcription of ribosomal RNA (rRNA) genes. Binds specifically to the boxA antiterminator sequence of the ribosomal RNA (rrn) operons. In Neisseria meningitidis serogroup B (strain ATCC BAA-335 / MC58), this protein is Transcription antitermination protein NusB.